The chain runs to 204 residues: Nascent polypeptide-associated complex subunit alpha (204 aa).

The span at 1–19 (MADPRVEELPDEEVPKANV) shows a compositional bias: basic and acidic residues. 2 disordered regions span residues 1–47 (MADP…IHSR) and 118–167 (QLAA…GLEA). The span at 22-32 (AGSDSESEAGE) shows a compositional bias: acidic residues. Positions 46-111 (SRNEKKARKA…AKIEDLNSQA (66 aa)) constitute an NAC-A/B domain. Over residues 118–128 (QLAAAEAAAGE) the composition is skewed to low complexity. The segment covering 129 to 151 (HAGHDHDHDHGKGKAPETEAKKE) has biased composition (basic and acidic residues). Residues 152–164 (EEEDDGEEVDETG) show a composition bias toward acidic residues. Residues 165–204 (LEAKDIELVMAQANVSRKKAVKALRENDNDIVNSIMALSI) form the UBA domain.

This sequence belongs to the NAC-alpha family. As to quaternary structure, part of the nascent polypeptide-associated complex (NAC), consisting of egd2 and egd1. NAC associates with ribosomes via egd1.

Its subcellular location is the cytoplasm. The protein resides in the nucleus. Functionally, component of the nascent polypeptide-associated complex (NAC), a dynamic component of the ribosomal exit tunnel, protecting the emerging polypeptides from interaction with other cytoplasmic proteins to ensure appropriate nascent protein targeting. The NAC complex also promotes mitochondrial protein import by enhancing productive ribosome interactions with the outer mitochondrial membrane and blocks the inappropriate interaction of ribosomes translating non-secretory nascent polypeptides with translocation sites in the membrane of the endoplasmic reticulum. Egd2 may also be involved in transcription regulation. This is Nascent polypeptide-associated complex subunit alpha (egd2) from Aspergillus fumigatus (strain ATCC MYA-4609 / CBS 101355 / FGSC A1100 / Af293) (Neosartorya fumigata).